A 248-amino-acid chain; its full sequence is 2,3-bisphosphoglycerate-dependent phosphoglycerate mutase (248 aa).

Substrate contacts are provided by residues 8–15 (RHGESEWN), 21–22 (TG), Arg-60, 87–90 (ERHY), Lys-98, 114–115 (RR), and 183–184 (GN). The active-site Tele-phosphohistidine intermediate is the His-9. The Proton donor/acceptor role is filled by Glu-87.

The protein belongs to the phosphoglycerate mutase family. BPG-dependent PGAM subfamily.

The enzyme catalyses (2R)-2-phosphoglycerate = (2R)-3-phosphoglycerate. It participates in carbohydrate degradation; glycolysis; pyruvate from D-glyceraldehyde 3-phosphate: step 3/5. Its function is as follows. Catalyzes the interconversion of 2-phosphoglycerate and 3-phosphoglycerate. This is 2,3-bisphosphoglycerate-dependent phosphoglycerate mutase from Borrelia hermsii (strain HS1 / DAH).